The chain runs to 134 residues: Large ribosomal subunit protein bL19 (134 aa).

A disordered region spans residues A110–A134. The span at S125–A134 shows a compositional bias: pro residues.

The protein belongs to the bacterial ribosomal protein bL19 family.

Functionally, this protein is located at the 30S-50S ribosomal subunit interface and may play a role in the structure and function of the aminoacyl-tRNA binding site. This Anaeromyxobacter sp. (strain Fw109-5) protein is Large ribosomal subunit protein bL19.